Here is a 236-residue protein sequence, read N- to C-terminus: Orotidine 5'-phosphate decarboxylase (236 aa).

Residues Asp-16, Lys-38, 65–74 (DLKYHDIPNT), Thr-124, Arg-185, Gln-194, Gly-214, and Arg-215 contribute to the substrate site. Residue Lys-67 is the Proton donor of the active site.

The protein belongs to the OMP decarboxylase family. Type 1 subfamily. In terms of assembly, homodimer.

The enzyme catalyses orotidine 5'-phosphate + H(+) = UMP + CO2. Its pathway is pyrimidine metabolism; UMP biosynthesis via de novo pathway; UMP from orotate: step 2/2. In terms of biological role, catalyzes the decarboxylation of orotidine 5'-monophosphate (OMP) to uridine 5'-monophosphate (UMP). In Hydrogenovibrio crunogenus (strain DSM 25203 / XCL-2) (Thiomicrospira crunogena), this protein is Orotidine 5'-phosphate decarboxylase.